The chain runs to 264 residues: S-adenosylmethionine decarboxylase proenzyme (264 aa).

The active-site Schiff-base intermediate with substrate; via pyruvic acid is the Ser112. Pyruvic acid (Ser); by autocatalysis is present on Ser112. The active-site Proton acceptor; for processing activity is the His117. The active-site Proton donor; for catalytic activity is the Cys140.

Belongs to the prokaryotic AdoMetDC family. Type 2 subfamily. Heterooctamer of four alpha and four beta chains arranged as a tetramer of alpha/beta heterodimers. Pyruvate serves as cofactor. Is synthesized initially as an inactive proenzyme. Formation of the active enzyme involves a self-maturation process in which the active site pyruvoyl group is generated from an internal serine residue via an autocatalytic post-translational modification. Two non-identical subunits are generated from the proenzyme in this reaction, and the pyruvate is formed at the N-terminus of the alpha chain, which is derived from the carboxyl end of the proenzyme. The post-translation cleavage follows an unusual pathway, termed non-hydrolytic serinolysis, in which the side chain hydroxyl group of the serine supplies its oxygen atom to form the C-terminus of the beta chain, while the remainder of the serine residue undergoes an oxidative deamination to produce ammonia and the pyruvoyl group blocking the N-terminus of the alpha chain.

It catalyses the reaction S-adenosyl-L-methionine + H(+) = S-adenosyl 3-(methylsulfanyl)propylamine + CO2. The protein operates within amine and polyamine biosynthesis; S-adenosylmethioninamine biosynthesis; S-adenosylmethioninamine from S-adenosyl-L-methionine: step 1/1. Functionally, catalyzes the decarboxylation of S-adenosylmethionine to S-adenosylmethioninamine (dcAdoMet), the propylamine donor required for the synthesis of the polyamines spermine and spermidine from the diamine putrescine. This Photorhabdus laumondii subsp. laumondii (strain DSM 15139 / CIP 105565 / TT01) (Photorhabdus luminescens subsp. laumondii) protein is S-adenosylmethionine decarboxylase proenzyme.